We begin with the raw amino-acid sequence, 297 residues long: MEINGTLIEDTFSEAFTGRCVRATITARDMETVRRAALDATATPGAVIGRVEGGVESFLGGEDTPDGRPGAVVQFYYALDDMEKFQVELSYRIRQDILVKPFTALYSSTPDPDGYLDMMKHVGHCGDGYEWLEEFNGREMINVPVAVPDFKIESRMGYREAIMGANFWYMCRDPDTVLEAGRAAIRAIEEVEGVVTPFDICSAASKPETNYPWIGPTTNHPYCPSLKEVLGDESRVPEGVGYIPEIVINGLTMEALEEAMRAGIEAVCRYDGVLRVSAGNYDGKLGDHRIDLHGVLG.

This sequence belongs to the FTR family.

The chain is Formylmethanofuran--tetrahydromethanopterin formyltransferase-like protein (ehaS) from Methanothermobacter thermautotrophicus (strain ATCC 29096 / DSM 1053 / JCM 10044 / NBRC 100330 / Delta H) (Methanobacterium thermoautotrophicum).